Reading from the N-terminus, the 95-residue chain is Opiscorpine-1 (95 aa).

Residues 1 to 19 (MNNKLTALIFLGLLAIASC) form the signal peptide. The BetaSPN-type CS-alpha/beta domain occupies 55 to 95 (EFMCVANVDMTKSCDTHCQKASGEKGYCHGTKCKCGVPLSY). Cystine bridges form between cysteine 58/cysteine 82, cysteine 68/cysteine 87, and cysteine 72/cysteine 89.

The protein belongs to the long chain scorpion toxin family. Class 3 subfamily. Expressed by the venom gland.

The protein resides in the secreted. Functionally, the short synthetic peptide (20-54) has antimicrobial activity against the yeasts F.culmorum (IC(50)=8.8 uM) and F.oxysporum (IC(50)=10 uM), and the Gram-negative bacteria E.coli. This chain is Opiscorpine-1, found in Opistophthalmus carinatus (African yellow leg scorpion).